The following is a 260-amino-acid chain: Snake venom serine protease pallabin (260 aa).

Residues 1 to 18 (MVLIRVLANLLILQLSYA) form the signal peptide. The propeptide occupies 19 to 24 (QKSSKL). Residues 25–251 (VIGGDECNIN…HLDWIENIIA (227 aa)) enclose the Peptidase S1 domain. 6 cysteine pairs are disulfide-bonded: Cys-31–Cys-163, Cys-50–Cys-66, Cys-98–Cys-258, Cys-142–Cys-212, Cys-174–Cys-191, and Cys-202–Cys-227. His-65 (charge relay system) is an active-site residue. Asn-103 carries N-linked (GlcNAc...) asparagine glycosylation. Asp-110 (charge relay system) is an active-site residue. Ser-206 (charge relay system) is an active-site residue.

This sequence belongs to the peptidase S1 family. Snake venom subfamily. In terms of assembly, monomer. As to expression, expressed by the venom gland.

The protein resides in the secreted. Functionally, snake venom serine protease that may act in the hemostasis system of the prey. This chain is Snake venom serine protease pallabin (JZTHR5), found in Gloydius halys (Chinese water mocassin).